The chain runs to 123 residues: MRHYEIVFMVHPDQSEQVAGMIERYTGSITEAGGKIHRLEDWGRRQLAYPINKLHKAHYVLMNVEADQAVIDELETAFRYNDAVLRNMIMRTKAAITEPSIMLKQKEERAPRREAEAKEFAAE.

Residues 102 to 123 (MLKQKEERAPRREAEAKEFAAE) form a disordered region. Residues 104 to 123 (KQKEERAPRREAEAKEFAAE) show a composition bias toward basic and acidic residues.

It belongs to the bacterial ribosomal protein bS6 family.

Functionally, binds together with bS18 to 16S ribosomal RNA. The polypeptide is Small ribosomal subunit protein bS6 (Vibrio vulnificus (strain CMCP6)).